Consider the following 259-residue polypeptide: Deoxyribose-phosphate aldolase (259 aa).

Aspartate 102 serves as the catalytic Proton donor/acceptor. The active-site Schiff-base intermediate with acetaldehyde is lysine 167. The active-site Proton donor/acceptor is lysine 201.

Belongs to the DeoC/FbaB aldolase family. DeoC type 2 subfamily.

The protein resides in the cytoplasm. The enzyme catalyses 2-deoxy-D-ribose 5-phosphate = D-glyceraldehyde 3-phosphate + acetaldehyde. The protein operates within carbohydrate degradation; 2-deoxy-D-ribose 1-phosphate degradation; D-glyceraldehyde 3-phosphate and acetaldehyde from 2-deoxy-alpha-D-ribose 1-phosphate: step 2/2. Functionally, catalyzes a reversible aldol reaction between acetaldehyde and D-glyceraldehyde 3-phosphate to generate 2-deoxy-D-ribose 5-phosphate. This chain is Deoxyribose-phosphate aldolase, found in Escherichia fergusonii (strain ATCC 35469 / DSM 13698 / CCUG 18766 / IAM 14443 / JCM 21226 / LMG 7866 / NBRC 102419 / NCTC 12128 / CDC 0568-73).